The following is a 544-amino-acid chain: Chaperonin GroEL 2 (544 aa).

ATP contacts are provided by residues 29–32, K50, 86–90, G414, and D494; these read TLGP and DGTTT.

This sequence belongs to the chaperonin (HSP60) family. As to quaternary structure, forms a cylinder of 14 subunits composed of two heptameric rings stacked back-to-back. Interacts with the co-chaperonin GroES.

It is found in the cytoplasm. It catalyses the reaction ATP + H2O + a folded polypeptide = ADP + phosphate + an unfolded polypeptide.. Functionally, together with its co-chaperonin GroES, plays an essential role in assisting protein folding. The GroEL-GroES system forms a nano-cage that allows encapsulation of the non-native substrate proteins and provides a physical environment optimized to promote and accelerate protein folding. This Psychromonas ingrahamii (strain DSM 17664 / CCUG 51855 / 37) protein is Chaperonin GroEL 2.